The chain runs to 199 residues: Ras-related and estrogen-regulated growth inhibitor (199 aa).

Residues 13 to 20, 60 to 64, and 118 to 121 each bind GTP; these read GRAGVGKS, DTAGQ, and NKAD.

It belongs to the small GTPase superfamily. Ras family. Detected in heart, brain, placenta, lung, liver, skin, kidney and pancreas. Detected in estrogen receptor-positive breast-derived cell lines, but not in estrogen receptor-negative cell lines. Expression is decreased or lost in a significant proportion of primary breast tumors with poor clinical prognosis.

It localises to the cytoplasm. The catalysed reaction is GTP + H2O = GDP + phosphate + H(+). In terms of biological role, binds GDP/GTP and possesses intrinsic GTPase activity. Has higher affinity for GDP than for GTP. In cell lines overexpression leads to a reduction in the rate of proliferation, colony formation and in tumorigenic potential. The polypeptide is Ras-related and estrogen-regulated growth inhibitor (RERG) (Homo sapiens (Human)).